A 196-amino-acid polypeptide reads, in one-letter code: RNA annealing protein YRA2 (196 aa).

Disordered regions lie at residues M1–Q63 and D143–N196. Residues Q63–Q137 form the RRM domain. Positions R149–G159 are enriched in basic and acidic residues.

The protein belongs to the YRA1 family. In terms of assembly, associates with mRNPs.

It is found in the nucleus. Its function is as follows. Involved in export of poly(A) mRNAs from the nucleus. Recruited to the coding sequences as well as poly-A sites of active genes. The polypeptide is RNA annealing protein YRA2 (YRA2) (Eremothecium gossypii (strain ATCC 10895 / CBS 109.51 / FGSC 9923 / NRRL Y-1056) (Yeast)).